The primary structure comprises 454 residues: MSLCLWKQCLDRLQDELPNTEFSMWIRSLKAKLNNNILEIYAPNKFVLEWVKDKYLNHLKKILQDYCGTNSPLIKFEIYQIYKENKLKKNIENNNNNKNEKLIWSNIPKFKNLSYRSNINKRYNFQNFVEGKSNQLARSAAFQAARNPGNSYNPLFLYGATGLGKTHLLHAIGNEILSYKYDIKIIFMNSECFVQDMVKALKNNAIEKFKLYYRSVDALLIDDIQFFAHKERSQEEFFHTFNTLIEGNQQIILTSDRYPKEINGVEDRLKSRFSWGLTIAIDPPEIETRVAILIKKADQNNVILSNEVAFFIAKHLRSNVRELEGALNRVILNSRFTHRAITVDFAREALQDILAVQEKIITIDNIQKTVAKYYKIKVSDLLSKKRSRSIARPRQMAMAMAKKLTNHSLPEIGEAFSGRDHTTVLHACCKIEQLRKENHDIKKDFLNLIRTLSK.

The domain I, interacts with DnaA modulators stretch occupies residues 1–79; sequence MSLCLWKQCL…NSPLIKFEIY (79 aa). The segment at 79-117 is domain II; it reads YQIYKENKLKKNIENNNNNKNEKLIWSNIPKFKNLSYRS. The segment at 118–334 is domain III, AAA+ region; that stretch reads NINKRYNFQN…GALNRVILNS (217 aa). 4 residues coordinate ATP: glycine 162, glycine 164, lysine 165, and threonine 166. The tract at residues 335 to 454 is domain IV, binds dsDNA; the sequence is RFTHRAITVD…FLNLIRTLSK (120 aa).

The protein belongs to the DnaA family. In terms of assembly, oligomerizes as a right-handed, spiral filament on DNA at oriC.

It localises to the cytoplasm. Its function is as follows. Plays an essential role in the initiation and regulation of chromosomal replication. ATP-DnaA binds to the origin of replication (oriC) to initiate formation of the DNA replication initiation complex once per cell cycle. Binds the DnaA box (a 9 base pair repeat at the origin) and separates the double-stranded (ds)DNA. Forms a right-handed helical filament on oriC DNA; dsDNA binds to the exterior of the filament while single-stranded (ss)DNA is stabiized in the filament's interior. The ATP-DnaA-oriC complex binds and stabilizes one strand of the AT-rich DNA unwinding element (DUE), permitting loading of DNA polymerase. After initiation quickly degrades to an ADP-DnaA complex that is not apt for DNA replication. Binds acidic phospholipids. This Buchnera aphidicola subsp. Acyrthosiphon pisum (strain 5A) protein is Chromosomal replication initiator protein DnaA.